A 500-amino-acid chain; its full sequence is Cholesterol 24-hydroxylase (500 aa).

Residues 3 to 23 (PGLLLLGSAVLLAFGLCCTFV) form a helical membrane-spanning segment. C437 provides a ligand contact to heme.

This sequence belongs to the cytochrome P450 family. Heme is required as a cofactor. As to expression, expressed in brain. The mRNA was broadly distributed with higher levels in gray matter zones and lower levels in regions rich in white matter. Not detected in fetal sample but its expression increases linearly with age.

It is found in the endoplasmic reticulum membrane. The protein resides in the microsome membrane. The protein localises to the postsynapse. Its subcellular location is the presynapse. It localises to the cell projection. It is found in the dendrite. The catalysed reaction is cholesterol + reduced [NADPH--hemoprotein reductase] + O2 = (24S)-hydroxycholesterol + oxidized [NADPH--hemoprotein reductase] + H2O + H(+). The enzyme catalyses cholestanol + reduced [NADPH--hemoprotein reductase] + O2 = (24S)-hydroxycholestanol + oxidized [NADPH--hemoprotein reductase] + H2O + H(+). It catalyses the reaction 7-dehydrocholesterol + reduced [NADPH--hemoprotein reductase] + O2 = cholesta-5,7-dien-3beta,24S-diol + oxidized [NADPH--hemoprotein reductase] + H2O + H(+). It carries out the reaction 7-dehydrocholesterol + reduced [NADPH--hemoprotein reductase] + O2 = cholesta-5,7-dien-3beta,25-diol + oxidized [NADPH--hemoprotein reductase] + H2O + H(+). The catalysed reaction is desmosterol + reduced [NADPH--hemoprotein reductase] + O2 = (24Z),26-hydroxydesmosterol + oxidized [NADPH--hemoprotein reductase] + H2O + H(+). The enzyme catalyses desmosterol + reduced [NADPH--hemoprotein reductase] + O2 = (24S)-25-epoxycholesterol + oxidized [NADPH--hemoprotein reductase] + H2O + H(+). It catalyses the reaction 4beta-hydroxycholesterol + reduced [NADPH--hemoprotein reductase] + O2 = 4beta,24S-dihydroxycholesterol + oxidized [NADPH--hemoprotein reductase] + H2O + H(+). It carries out the reaction (24S)-hydroxycholesterol + reduced [NADPH--hemoprotein reductase] + O2 = (24S,25R)-24,26-dihydroxycholesterol + oxidized [NADPH--hemoprotein reductase] + H2O + H(+). The catalysed reaction is (24S)-hydroxycholesterol + reduced [NADPH--hemoprotein reductase] + O2 = 24S,25-dihydroxycholesterol + oxidized [NADPH--hemoprotein reductase] + H2O + H(+). The enzyme catalyses 7alpha-hydroxycholesterol + reduced [NADPH--hemoprotein reductase] + O2 = (24S)-7alpha-dihydroxycholesterol + oxidized [NADPH--hemoprotein reductase] + H2O + H(+). It catalyses the reaction progesterone + reduced [NADPH--hemoprotein reductase] + O2 = 17alpha-hydroxyprogesterone + oxidized [NADPH--hemoprotein reductase] + H2O + H(+). It carries out the reaction testosterone + reduced [NADPH--hemoprotein reductase] + O2 = 16beta,17beta-dihydroxyandrost-4-en-3-one + oxidized [NADPH--hemoprotein reductase] + H2O + H(+). The catalysed reaction is testosterone + reduced [NADPH--hemoprotein reductase] + O2 = 2-hydroxytestosterone + oxidized [NADPH--hemoprotein reductase] + H2O + H(+). The enzyme catalyses testosterone + reduced [NADPH--hemoprotein reductase] + O2 = 6beta,17beta-dihydroxyandrost-4-en-3-one + oxidized [NADPH--hemoprotein reductase] + H2O + H(+). Its pathway is steroid metabolism; cholesterol degradation. It functions in the pathway lipid metabolism; C21-steroid hormone metabolism. Its function is as follows. P450 monooxygenase that plays a major role in cholesterol homeostasis in the brain. Primarily catalyzes the hydroxylation (with S stereochemistry) at C-24 of cholesterol side chain, triggering cholesterol diffusion out of neurons and its further degradation. By promoting constant cholesterol elimination in neurons, may activate the mevalonate pathway and coordinate the synthesis of new cholesterol and nonsterol isoprenoids involved in synaptic activity and learning. Further hydroxylates cholesterol derivatives and hormone steroids on both the ring and side chain of these molecules, converting them into active oxysterols involved in lipid signaling and biosynthesis. Acts as an epoxidase converting cholesta-5,24-dien-3beta-ol/desmosterol into (24S),25-epoxycholesterol, an abundant lipid ligand of nuclear NR1H2 and NR1H3 receptors shown to promote neurogenesis in developing brain. May also catalyze the oxidative metabolism of xenobiotics, such as clotrimazole. This Homo sapiens (Human) protein is Cholesterol 24-hydroxylase.